Consider the following 191-residue polypeptide: CASP-like protein 2U4 (191 aa).

Residues Met1 to Arg25 are Cytoplasmic-facing. A helical transmembrane segment spans residues Leu26–Ile46. Topologically, residues Ala47–Ala68 are extracellular. Residues Phe69–Leu89 traverse the membrane as a helical segment. Topologically, residues Ser90 to Asp114 are cytoplasmic. The helical transmembrane segment at Gln115–Ala135 threads the bilayer. At Lys136–Arg157 the chain is on the extracellular side. Asn137 is a glycosylation site (N-linked (GlcNAc...) asparagine). Residues Ala158–Ile178 form a helical membrane-spanning segment. Over Ser179 to Val191 the chain is Cytoplasmic.

Belongs to the Casparian strip membrane proteins (CASP) family. In terms of assembly, homodimer and heterodimers.

It localises to the cell membrane. This chain is CASP-like protein 2U4, found in Selaginella moellendorffii (Spikemoss).